Reading from the N-terminus, the 500-residue chain is Aldehyde dehydrogenase, mitochondrial (500 aa).

3 positions are modified to N6-acetyllysine: K35, K56, and K142. Residue 245–250 (GSTEVG) participates in NAD(+) binding. The active-site Proton acceptor is the E268. C302 acts as the Nucleophile in catalysis. An N6-acetyllysine mark is found at K358, K366, K409, K411, K424, and K434.

The protein belongs to the aldehyde dehydrogenase family. In terms of assembly, homotetramer. In response to mitochondrial stress, the precursor protein is ubiquitinated by the SIFI complex in the cytoplasm before mitochondrial import, leading to its degradation. Within the SIFI complex, UBR4 initiates ubiquitin chain that are further elongated or branched by KCMF1.

Its subcellular location is the mitochondrion matrix. The catalysed reaction is an aldehyde + NAD(+) + H2O = a carboxylate + NADH + 2 H(+). It participates in alcohol metabolism; ethanol degradation; acetate from ethanol: step 2/2. Its function is as follows. Required for clearance of cellular formaldehyde, a cytotoxic and carcinogenic metabolite that induces DNA damage. The chain is Aldehyde dehydrogenase, mitochondrial (ALDH2) from Equus caballus (Horse).